The following is a 270-amino-acid chain: Tetraspanin-14 (270 aa).

At 1 to 17 the chain is on the cytoplasmic side; it reads MHYYRYSNAEVSCWYKY. Residues 18–38 form a helical membrane-spanning segment; that stretch reads LLFSYNIVFWLAGVVFLGVGL. At 39–61 the chain is on the extracellular side; that stretch reads WAWSEKGVLSDLTKVTRLHGIDP. A helical transmembrane segment spans residues 62–82; sequence VVLVLMVGVVMFTLGFAGCVG. The Cytoplasmic portion of the chain corresponds to 83-92; it reads ALRENICLLK. A helical transmembrane segment spans residues 93–113; it reads FFCGAIVLIFFLELAVAVLAF. Over 114 to 232 the chain is Extracellular; that stretch reads LFQDWVRDRF…QALEGWLPRN (119 aa). The tract at residues 114-232 is necessary and sufficient for interaction with ADAM10; it reads LFQDWVRDRF…QALEGWLPRN (119 aa). Cystine bridges form between cysteine 153–cysteine 221, cysteine 154–cysteine 186, cysteine 170–cysteine 180, and cysteine 187–cysteine 200. Asparagine 169 is a glycosylation site (N-linked (GlcNAc...) asparagine). The chain crosses the membrane as a helical span at residues 233–253; sequence IYIVAGVFIAISLLQIFGIFL. Topologically, residues 254 to 270 are cytoplasmic; the sequence is ARTLISDIEAVKAGHHF.

This sequence belongs to the tetraspanin (TM4SF) family. Interacts with ADAM10; the interaction promotes ADAM10 maturation and cell surface expression.

Its subcellular location is the cell membrane. Its function is as follows. Part of TspanC8 subgroup, composed of 6 members that interact with the transmembrane metalloprotease ADAM10. This interaction is required for ADAM10 exit from the endoplasmic reticulum and for enzymatic maturation and trafficking to the cell surface as well as substrate specificity. Different TspanC8/ADAM10 complexes have distinct substrates. Negatively regulates ADAM10-mediated cleavage of GP6. Promotes ADAM10-mediated cleavage of CDH5. In Mus musculus (Mouse), this protein is Tetraspanin-14 (Tspan14).